The sequence spans 329 residues: MVSQLTDAFARKFYYLRLSITDVCNFRCTYCLPDGYQANGTNPHRFLSLDEIRRVSRAFAELGTEKVRLTGGEPSLRRDFVDIIAAIRENPAIRTLAVTTNGYRLARDVAQWRDAGLTALNVSVDSLDARQFHAITGQDKFRQVMDGIDAAFDCGFAKVKVNTVLMRDVNAGSLQTFLDWIKHRPIQLRFIELMETGEGGELFRRHHVSGEVIRQQLLQQGWQQQQRARSDGPAQVFCHPDYEGEIGLIMPYEKDFCLSCNRLRVSAIGNLHLCLFGEQGIPLRDLLADDRHLNDLKMRISGGLSTKKQTHFLHEGNSGITQNLSFIGG.

Residues 8 to 234 (AFARKFYYLR…QQRARSDGPA (227 aa)) form the Radical SAM core domain. Arg-17 lines the GTP pocket. Cys-24 and Cys-28 together coordinate [4Fe-4S] cluster. S-adenosyl-L-methionine is bound at residue Tyr-30. Cys-31 provides a ligand contact to [4Fe-4S] cluster. Arg-68 contacts GTP. Gly-72 provides a ligand contact to S-adenosyl-L-methionine. Position 99 (Thr-99) interacts with GTP. Position 123 (Ser-123) interacts with S-adenosyl-L-methionine. Lys-160 is a binding site for GTP. Met-194 contributes to the S-adenosyl-L-methionine binding site. Cys-257 and Cys-260 together coordinate [4Fe-4S] cluster. 262-264 (RLR) provides a ligand contact to GTP. Position 274 (Cys-274) interacts with [4Fe-4S] cluster.

It belongs to the radical SAM superfamily. MoaA family. In terms of assembly, monomer and homodimer. [4Fe-4S] cluster serves as cofactor.

The enzyme catalyses GTP + AH2 + S-adenosyl-L-methionine = (8S)-3',8-cyclo-7,8-dihydroguanosine 5'-triphosphate + 5'-deoxyadenosine + L-methionine + A + H(+). It functions in the pathway cofactor biosynthesis; molybdopterin biosynthesis. Functionally, catalyzes the cyclization of GTP to (8S)-3',8-cyclo-7,8-dihydroguanosine 5'-triphosphate. The sequence is that of GTP 3',8-cyclase from Pectobacterium atrosepticum (strain SCRI 1043 / ATCC BAA-672) (Erwinia carotovora subsp. atroseptica).